The following is a 420-amino-acid chain: tRNA(Ile)-lysidine synthase, chloroplastic (420 aa).

An ATP-binding site is contributed by 63–68 (SGGQDS).

It belongs to the tRNA(Ile)-lysidine synthase family.

The protein localises to the plastid. It is found in the chloroplast. The catalysed reaction is cytidine(34) in tRNA(Ile2) + L-lysine + ATP = lysidine(34) in tRNA(Ile2) + AMP + diphosphate + H(+). Ligates lysine onto the cytidine present at position 34 of the AUA codon-specific tRNA(Ile) that contains the anticodon CAU, in an ATP-dependent manner. Cytidine is converted to lysidine, thus changing the amino acid specificity of the tRNA from methionine to isoleucine. In Zygnema circumcarinatum (Green alga), this protein is tRNA(Ile)-lysidine synthase, chloroplastic.